Consider the following 343-residue polypeptide: L-threonine 3-dehydrogenase (343 aa).

Cys38 is a Zn(2+) binding site. Catalysis depends on charge relay system residues Thr40 and His43. 6 residues coordinate Zn(2+): His63, Glu64, Cys93, Cys96, Cys99, and Cys107. Residues Ile175, Asp195, Arg200, Leu262 to Ile264, and Ile286 to Tyr287 each bind NAD(+).

The protein belongs to the zinc-containing alcohol dehydrogenase family. In terms of assembly, homotetramer. It depends on Zn(2+) as a cofactor.

Its subcellular location is the cytoplasm. It catalyses the reaction L-threonine + NAD(+) = (2S)-2-amino-3-oxobutanoate + NADH + H(+). It participates in amino-acid degradation; L-threonine degradation via oxydo-reductase pathway; glycine from L-threonine: step 1/2. Catalyzes the NAD(+)-dependent oxidation of L-threonine to 2-amino-3-ketobutyrate. This chain is L-threonine 3-dehydrogenase, found in Burkholderia mallei (strain NCTC 10247).